Here is a 109-residue protein sequence, read N- to C-terminus: Resistin (109 aa).

The signal sequence occupies residues Met-1–Gly-18. Cystine bridges form between Cys-51–Cys-104, Cys-63–Cys-103, Cys-72–Cys-89, Cys-74–Cys-91, and Cys-78–Cys-93.

It belongs to the resistin/FIZZ family. In terms of assembly, homodimer; disulfide-linked.

The protein localises to the secreted. In terms of biological role, hormone that seems to suppress insulin ability to stimulate glucose uptake into adipose cells. Potentially links obesity to diabetes. This chain is Resistin (RETN), found in Bos taurus (Bovine).